The primary structure comprises 225 residues: NAD(P)H-quinone oxidoreductase subunit K, chloroplastic (225 aa).

[4Fe-4S] cluster is bound by residues Cys-43, Cys-44, Cys-108, and Cys-139.

This sequence belongs to the complex I 20 kDa subunit family. NDH is composed of at least 16 different subunits, 5 of which are encoded in the nucleus. Requires [4Fe-4S] cluster as cofactor.

It is found in the plastid. Its subcellular location is the chloroplast thylakoid membrane. It carries out the reaction a plastoquinone + NADH + (n+1) H(+)(in) = a plastoquinol + NAD(+) + n H(+)(out). The enzyme catalyses a plastoquinone + NADPH + (n+1) H(+)(in) = a plastoquinol + NADP(+) + n H(+)(out). NDH shuttles electrons from NAD(P)H:plastoquinone, via FMN and iron-sulfur (Fe-S) centers, to quinones in the photosynthetic chain and possibly in a chloroplast respiratory chain. The immediate electron acceptor for the enzyme in this species is believed to be plastoquinone. Couples the redox reaction to proton translocation, and thus conserves the redox energy in a proton gradient. The sequence is that of NAD(P)H-quinone oxidoreductase subunit K, chloroplastic from Manihot esculenta (Cassava).